Here is a 404-residue protein sequence, read N- to C-terminus: Starvation-sensing protein RspA (404 aa).

It belongs to the mandelate racemase/muconate lactonizing enzyme family.

In terms of biological role, probably involved in the degradation of homoserine lactone (HSL) or of a metabolite of HSL that signals starvation. The polypeptide is Starvation-sensing protein RspA (Escherichia coli (strain K12)).